A 71-amino-acid chain; its full sequence is Large ribosomal subunit protein bL31 (71 aa).

Residues C16, C18, C36, and C39 each contribute to the Zn(2+) site.

Belongs to the bacterial ribosomal protein bL31 family. Type A subfamily. Part of the 50S ribosomal subunit. Requires Zn(2+) as cofactor.

Binds the 23S rRNA. The polypeptide is Large ribosomal subunit protein bL31 (Thermotoga maritima (strain ATCC 43589 / DSM 3109 / JCM 10099 / NBRC 100826 / MSB8)).